We begin with the raw amino-acid sequence, 99 residues long: Signal recognition particle 19 kDa protein (99 aa).

It belongs to the SRP19 family. Part of the signal recognition particle protein translocation system, which is composed of SRP and FtsY. Archaeal SRP consists of a 7S RNA molecule of 300 nucleotides and two protein subunits: SRP54 and SRP19.

It localises to the cytoplasm. Its function is as follows. Involved in targeting and insertion of nascent membrane proteins into the cytoplasmic membrane. Binds directly to 7S RNA and mediates binding of the 54 kDa subunit of the SRP. This is Signal recognition particle 19 kDa protein from Pyrococcus abyssi (strain GE5 / Orsay).